Consider the following 67-residue polypeptide: DNA-directed RNA polymerase subunit omega (67 aa).

It belongs to the RNA polymerase subunit omega family. As to quaternary structure, the RNAP catalytic core consists of 2 alpha, 1 beta, 1 beta' and 1 omega subunit. When a sigma factor is associated with the core the holoenzyme is formed, which can initiate transcription.

The catalysed reaction is RNA(n) + a ribonucleoside 5'-triphosphate = RNA(n+1) + diphosphate. In terms of biological role, promotes RNA polymerase assembly. Latches the N- and C-terminal regions of the beta' subunit thereby facilitating its interaction with the beta and alpha subunits. This Paracidovorax citrulli (strain AAC00-1) (Acidovorax citrulli) protein is DNA-directed RNA polymerase subunit omega.